The following is a 314-amino-acid chain: Olfactory receptor 51I1 (314 aa).

Over 1–27 (MLGLNGTPFQPATLQLTGIPGIQTGLT) the chain is Extracellular. Residues 28–48 (WVALIFCILYMISIVGNLSIL) form a helical membrane-spanning segment. At 49–56 (TLVFWEPA) the chain is on the cytoplasmic side. A helical transmembrane segment spans residues 57-77 (LHQPMYYFLSMLALNDLGVSF). Residues 78-101 (STLPTVISTFCFNYNHVAFNACLV) are Extracellular-facing. Cys-99 and Cys-191 are joined by a disulfide. Residues 102 to 122 (QMFFIHTFSFMESGILLAMSL) traverse the membrane as a helical segment. The Cytoplasmic segment spans residues 123 to 141 (DRFVAICYPLRYVTVLTHN). A helical membrane pass occupies residues 142-162 (RILAMGLGILTKSFTTLFPFP). Topologically, residues 163–198 (FVVKRLPFCKGNVLHHSYCLHPDLMKVACGDIHVNN) are extracellular. Residues 199-219 (IYGLLVIIFTYGMDSTFILLS) traverse the membrane as a helical segment. Residues 220–239 (YALILRAMLVIISQEQRLKA) lie on the Cytoplasmic side of the membrane. Residues 240–260 (LNTCMSHICAVLAFYVPIIAV) form a helical membrane-spanning segment. At 261 to 275 (SMIHRFWKSAPPVVH) the chain is on the extracellular side. A helical membrane pass occupies residues 276 to 296 (VMMSNVYLFVPPMLNPIIYSV). Residues 297–314 (KTKEIRKGILKFFHKSQA) lie on the Cytoplasmic side of the membrane.

The protein belongs to the G-protein coupled receptor 1 family.

Its subcellular location is the cell membrane. Odorant receptor. This chain is Olfactory receptor 51I1 (OR51I1), found in Homo sapiens (Human).